The chain runs to 925 residues: Coronin-7 (925 aa).

WD repeat units lie at residues 75–115, 124–163, 166–205, and 209–253; these read CHSD…QALP, PEDL…PLTE, AHGD…QASQ, and AHEN…SALA. Disordered regions lie at residues 196–216 and 399–465; these read DPRT…SRDS and LVPP…SLQS. Residues 201–210 show a composition bias toward polar residues; it reads PQASQSTQAH. Residues 429 to 460 are compositionally biased toward low complexity; sequence SSPPSSLTSPSTPSSLGPTLSSTSGIGTGPSL. Residues Ser462 and Ser465 each carry the phosphoserine modification. Residue Lys472 forms a Glycyl lysine isopeptide (Lys-Gly) (interchain with G-Cter in ubiquitin) linkage. 3 WD repeats span residues 542-582, 592-632, and 635-674; these read QNGA…LEEV, GHME…DRLK, and GHQD…EPLQ. Lys680 participates in a covalent cross-link: Glycyl lysine isopeptide (Lys-Gly) (interchain with G-Cter in ubiquitin). One copy of the WD 8 repeat lies at 728-768; the sequence is DVAPSTLVPSYEPRHWPGAPDWQGDARVFLYELLPESPFFM. The interval 857–925 is disordered; sequence LQPPDMSPVS…FEGVDEDEWD (69 aa). Low complexity predominate over residues 866 to 882; that stretch reads SQAPREAPARRAPSSAQ. Basic and acidic residues predominate over residues 884–896; sequence LEEKSDQQKKEEL. Residue Ser915 is modified to Phosphoserine.

It belongs to the WD repeat coronin family. As to quaternary structure, interacts with clathrin adapter AP1 complex. This interaction takes place at Golgi membranes and not AP1-positive endosomal membranes. Interacts (when ubiquitinated at Lys-472) with EPS15. Post-translationally, the membrane-associated form is phosphorylated on tyrosine residues. Ubiquitinated via 'Lys-33'-linked ubiquitin chains by the BCR(KLHL20) E3 ubiquitin ligase complex: 'Lys-33'-linked ubiquitination promotes interaction with EPS15 and facilitates actin polymerization at the trans-Golgi network, thereby facilitating post-Golgi trafficking. Deubiquitinated by ZRANB1/TRABID.

The protein resides in the golgi apparatus membrane. Its subcellular location is the golgi apparatus. The protein localises to the trans-Golgi network. It is found in the cytoplasmic vesicle. It localises to the cytoplasm. The protein resides in the cytosol. In terms of biological role, F-actin regulator involved in anterograde Golgi to endosome transport: upon ubiquitination via 'Lys-33'-linked ubiquitin chains by the BCR(KLHL20) E3 ubiquitin ligase complex, interacts with EPS15 and localizes to the trans-Golgi network, where it promotes actin polymerization, thereby facilitating post-Golgi trafficking. May play a role in the maintenance of the Golgi apparatus morphology. The sequence is that of Coronin-7 (CORO7) from Pongo abelii (Sumatran orangutan).